Here is a 768-residue protein sequence, read N- to C-terminus: Integrin beta-8 (768 aa).

A signal peptide spans M1–S42. Residues E43–R683 are Extracellular-facing. Positions R46–P95 constitute a PSI domain. 25 disulfide bridges follow: C47–C65, C55–C469, C58–C83, C68–C94, C211–C218, C266–C307, C407–C419, C439–C467, C471–C491, C471–C494, C481–C494, C499–C528, C511–C526, C520–C531, C533–C546, C553–C567, C561–C572, C574–C583, C585–C609, C593–C607, C601–C612, C614–C624, C627–C630, C634–C661, and C640–C657. In terms of domain architecture, VWFA spans P146–L384. 2 residues coordinate Mg(2+): D154 and S156. Position 193 (D193) interacts with Ca(2+). N233 carries an N-linked (GlcNAc...) asparagine glycan. Residues N249, D251, P253, and E254 each contribute to the Ca(2+) site. E254 serves as a coordination point for Mg(2+). A glycan (N-linked (GlcNAc...) asparagine) is linked at N402. Residues N421, N431, and N456 are each glycosylated (N-linked (GlcNAc...) asparagine). I-EGF domains follow at residues C471 to Q495, C499 to E547, K548 to Q584, and C585 to E625. N648 carries N-linked (GlcNAc...) asparagine glycosylation. A helical membrane pass occupies residues I684 to I703. Residues R704–F768 lie on the Cytoplasmic side of the membrane.

The protein belongs to the integrin beta chain family. In terms of assembly, heterodimer of an alpha and a beta subunit. Beta-8 (ITGB8) associates with alpha-V (ITGAV) to form ITGAV:ITGB8. ITGAV:ITGB8 interacts with TGFB1. As to expression, placenta, kidney, brain, ovary, uterus and in several transformed cells.

The protein localises to the cell membrane. Integrin alpha-V:beta-8 (ITGAV:ITGB8) is a receptor for fibronectin. It recognizes the sequence R-G-D in its ligands. Integrin alpha-V:beta-6 (ITGAV:ITGB6) mediates R-G-D-dependent release of transforming growth factor beta-1 (TGF-beta-1) from regulatory Latency-associated peptide (LAP), thereby playing a key role in TGF-beta-1 activation on the surface of activated regulatory T-cells (Tregs). Required during vasculogenesis. The protein is Integrin beta-8 (ITGB8) of Oryctolagus cuniculus (Rabbit).